We begin with the raw amino-acid sequence, 404 residues long: CCA-adding enzyme (404 aa).

ATP contacts are provided by Gly27 and Arg30. CTP-binding residues include Gly27 and Arg30. 2 residues coordinate Mg(2+): Asp40 and Asp42. Arg111, Asp154, Arg157, Arg160, and Arg163 together coordinate ATP. CTP is bound by residues Arg111, Asp154, Arg157, Arg160, and Arg163.

This sequence belongs to the tRNA nucleotidyltransferase/poly(A) polymerase family. Bacterial CCA-adding enzyme type 3 subfamily. Homodimer. It depends on Mg(2+) as a cofactor.

The catalysed reaction is a tRNA precursor + 2 CTP + ATP = a tRNA with a 3' CCA end + 3 diphosphate. It carries out the reaction a tRNA with a 3' CCA end + 2 CTP + ATP = a tRNA with a 3' CCACCA end + 3 diphosphate. Catalyzes the addition and repair of the essential 3'-terminal CCA sequence in tRNAs without using a nucleic acid template. Adds these three nucleotides in the order of C, C, and A to the tRNA nucleotide-73, using CTP and ATP as substrates and producing inorganic pyrophosphate. tRNA 3'-terminal CCA addition is required both for tRNA processing and repair. Also involved in tRNA surveillance by mediating tandem CCA addition to generate a CCACCA at the 3' terminus of unstable tRNAs. While stable tRNAs receive only 3'-terminal CCA, unstable tRNAs are marked with CCACCA and rapidly degraded. The sequence is that of CCA-adding enzyme from Geobacillus kaustophilus (strain HTA426).